The primary structure comprises 204 residues: Imidazole glycerol phosphate synthase subunit HisH 1 (204 aa).

One can recognise a Glutamine amidotransferase type-1 domain in the interval 5 to 204 (KVVIIDTGCA…AKLIQNFLEL (200 aa)). Cysteine 80 functions as the Nucleophile in the catalytic mechanism. Active-site residues include histidine 186 and glutamate 188.

As to quaternary structure, heterodimer of HisH and HisF.

The protein resides in the cytoplasm. The catalysed reaction is 5-[(5-phospho-1-deoxy-D-ribulos-1-ylimino)methylamino]-1-(5-phospho-beta-D-ribosyl)imidazole-4-carboxamide + L-glutamine = D-erythro-1-(imidazol-4-yl)glycerol 3-phosphate + 5-amino-1-(5-phospho-beta-D-ribosyl)imidazole-4-carboxamide + L-glutamate + H(+). It catalyses the reaction L-glutamine + H2O = L-glutamate + NH4(+). It participates in amino-acid biosynthesis; L-histidine biosynthesis; L-histidine from 5-phospho-alpha-D-ribose 1-diphosphate: step 5/9. Its function is as follows. IGPS catalyzes the conversion of PRFAR and glutamine to IGP, AICAR and glutamate. The HisH subunit provides the glutamine amidotransferase activity that produces the ammonia necessary to HisF for the synthesis of IGP and AICAR. This is Imidazole glycerol phosphate synthase subunit HisH 1 (hisH1) from Vibrio vulnificus (strain YJ016).